A 264-amino-acid chain; its full sequence is tRNA pseudouridine synthase A (264 aa).

The active-site Nucleophile is D51. Y109 serves as a coordination point for substrate.

It belongs to the tRNA pseudouridine synthase TruA family. In terms of assembly, homodimer.

The catalysed reaction is uridine(38/39/40) in tRNA = pseudouridine(38/39/40) in tRNA. Formation of pseudouridine at positions 38, 39 and 40 in the anticodon stem and loop of transfer RNAs. This Pasteurella multocida (strain Pm70) protein is tRNA pseudouridine synthase A.